A 127-amino-acid polypeptide reads, in one-letter code: Snaclec CHH-B subunit alpha (127 aa).

3 disulfides stabilise this stretch: cysteine 4–cysteine 15, cysteine 32–cysteine 120, and cysteine 95–cysteine 112. In terms of domain architecture, C-type lectin spans 11–121 (YDRYCYKPFK…CEQQHSFICK (111 aa)).

Belongs to the snaclec family. As to quaternary structure, heterodimer of subunits alpha and beta; disulfide-linked. In terms of tissue distribution, expressed by the venom gland.

The protein localises to the secreted. Binds to the subunit GPIbalpha (GP1BA) of the platelet GPIb/V/IX receptor system. It inhibits ristocetin- and vWF-induced platelet aggregation in platelet-rich plasma by inhibiting the binding of vWF to GPIbalpha. This chain is Snaclec CHH-B subunit alpha, found in Crotalus horridus (Timber rattlesnake).